The primary structure comprises 467 residues: Cysteine--tRNA ligase (467 aa).

Cys28 lines the Zn(2+) pocket. Residues 30-40 carry the 'HIGH' region motif; the sequence is ITAYDYSHIGH. Zn(2+)-binding residues include Cys211, His236, and Glu240. Residues 268–272 carry the 'KMSKS' region motif; the sequence is KMSKS. ATP is bound at residue Lys271.

This sequence belongs to the class-I aminoacyl-tRNA synthetase family. Zn(2+) serves as cofactor.

It localises to the cytoplasm. It catalyses the reaction tRNA(Cys) + L-cysteine + ATP = L-cysteinyl-tRNA(Cys) + AMP + diphosphate. The sequence is that of Cysteine--tRNA ligase (cysS) from Archaeoglobus fulgidus (strain ATCC 49558 / DSM 4304 / JCM 9628 / NBRC 100126 / VC-16).